Reading from the N-terminus, the 200-residue chain is Recombination protein RecR (200 aa).

Residues 59-74 form a C4-type zinc finger; that stretch reads CDICGNVCETSPCPVC. Positions 82 to 177 constitute a Toprim domain; it reads SVICVVEEPK…KVTRLASGLP (96 aa).

The protein belongs to the RecR family.

Functionally, may play a role in DNA repair. It seems to be involved in an RecBC-independent recombinational process of DNA repair. It may act with RecF and RecO. The chain is Recombination protein RecR from Bifidobacterium adolescentis (strain ATCC 15703 / DSM 20083 / NCTC 11814 / E194a).